A 95-amino-acid polypeptide reads, in one-letter code: Glutamyl-tRNA(Gln) amidotransferase subunit C (95 aa).

This sequence belongs to the GatC family. In terms of assembly, heterotrimer of A, B and C subunits.

It catalyses the reaction L-glutamyl-tRNA(Gln) + L-glutamine + ATP + H2O = L-glutaminyl-tRNA(Gln) + L-glutamate + ADP + phosphate + H(+). It carries out the reaction L-aspartyl-tRNA(Asn) + L-glutamine + ATP + H2O = L-asparaginyl-tRNA(Asn) + L-glutamate + ADP + phosphate + 2 H(+). In terms of biological role, allows the formation of correctly charged Asn-tRNA(Asn) or Gln-tRNA(Gln) through the transamidation of misacylated Asp-tRNA(Asn) or Glu-tRNA(Gln) in organisms which lack either or both of asparaginyl-tRNA or glutaminyl-tRNA synthetases. The reaction takes place in the presence of glutamine and ATP through an activated phospho-Asp-tRNA(Asn) or phospho-Glu-tRNA(Gln). The polypeptide is Glutamyl-tRNA(Gln) amidotransferase subunit C (Rhizobium meliloti (strain 1021) (Ensifer meliloti)).